Consider the following 264-residue polypeptide: S-adenosylmethionine decarboxylase proenzyme (264 aa).

The active-site Schiff-base intermediate with substrate; via pyruvic acid is the Ser-113. Position 113 is a pyruvic acid (Ser); by autocatalysis (Ser-113). The active-site Proton acceptor; for processing activity is His-118. Catalysis depends on Cys-141, which acts as the Proton donor; for catalytic activity.

This sequence belongs to the prokaryotic AdoMetDC family. Type 2 subfamily. Heterooctamer of four alpha and four beta chains arranged as a tetramer of alpha/beta heterodimers. It depends on pyruvate as a cofactor. Post-translationally, is synthesized initially as an inactive proenzyme. Formation of the active enzyme involves a self-maturation process in which the active site pyruvoyl group is generated from an internal serine residue via an autocatalytic post-translational modification. Two non-identical subunits are generated from the proenzyme in this reaction, and the pyruvate is formed at the N-terminus of the alpha chain, which is derived from the carboxyl end of the proenzyme. The post-translation cleavage follows an unusual pathway, termed non-hydrolytic serinolysis, in which the side chain hydroxyl group of the serine supplies its oxygen atom to form the C-terminus of the beta chain, while the remainder of the serine residue undergoes an oxidative deamination to produce ammonia and the pyruvoyl group blocking the N-terminus of the alpha chain.

It carries out the reaction S-adenosyl-L-methionine + H(+) = S-adenosyl 3-(methylsulfanyl)propylamine + CO2. It functions in the pathway amine and polyamine biosynthesis; S-adenosylmethioninamine biosynthesis; S-adenosylmethioninamine from S-adenosyl-L-methionine: step 1/1. In terms of biological role, catalyzes the decarboxylation of S-adenosylmethionine to S-adenosylmethioninamine (dcAdoMet), the propylamine donor required for the synthesis of the polyamines spermine and spermidine from the diamine putrescine. In Xanthomonas campestris pv. campestris (strain B100), this protein is S-adenosylmethionine decarboxylase proenzyme.